A 298-amino-acid polypeptide reads, in one-letter code: 3-sulfolactaldehyde reductase (298 aa).

Residues 11-12 (QM), D31, L65, and T96 each bind NAD(+). R123 provides a ligand contact to 2,3-dihydroxypropane-1-sulfonate. The active site involves K171. Position 174–178 (174–178 (NNYMS)) interacts with 2,3-dihydroxypropane-1-sulfonate. K240 serves as a coordination point for NAD(+).

It belongs to the HIBADH-related family. 3-sulfolactaldehyde reductase subfamily. Homotetramer. Dimer of dimers.

The enzyme catalyses (2S)-3-sulfopropanediol + NAD(+) = (2S)-3-sulfolactaldehyde + NADH + H(+). The catalysed reaction is 4-hydroxybutanoate + NAD(+) = succinate semialdehyde + NADH + H(+). Its activity is regulated as follows. Inhibited by the NADH analogs tetrahydro-NADH and hexahydro-NADH. Reduces 3-sulfolactaldehyde (SLA) to 2,3-dihydroxypropane 1-sulfonate (DHPS). Metabolite profiling studies showed that the enzyme also catalyzes in vitro the NADH-dependent reduction of succinic semialdehyde (SSA) to 4-hydroxybutyrate (GHB), and that it could be involved in the metabolism of SSA, and other potentially toxic intermediates that may accumulate under stress conditions. However, the enzyme exhibits a 42,000-fold greater catalytic efficiency for the reduction of SLA over SSA. Shows no detectable activity on the analogous glycolytic intermediate glyceraldehyde-3-phosphate. In Escherichia coli (strain K12), this protein is 3-sulfolactaldehyde reductase (yihU).